Reading from the N-terminus, the 67-residue chain is Prokaryotic ubiquitin-like protein Pup (67 aa).

The interval 1-26 is disordered; sequence MATKETGGQKHATRRNQEVEEIEVTT. The tract at residues 23–61 is ARC ATPase binding; it reads EVTTETSVRNEKLAEDVDDILDEIDEVLESNAEDFVRQF. A coiled-coil region spans residues 27-55; sequence ETSVRNEKLAEDVDDILDEIDEVLESNAE. E67 participates in a covalent cross-link: Isoglutamyl lysine isopeptide (Glu-Lys) (interchain with K-? in acceptor proteins).

This sequence belongs to the prokaryotic ubiquitin-like protein family. As to quaternary structure, strongly interacts with the proteasome-associated ATPase ARC through a hydrophobic interface; the interacting region of Pup lies in its C-terminal half. There is one Pup binding site per ARC hexamer ring.

The protein operates within protein degradation; proteasomal Pup-dependent pathway. Functionally, protein modifier that is covalently attached to lysine residues of substrate proteins, thereby targeting them for proteasomal degradation. The tagging system is termed pupylation. The sequence is that of Prokaryotic ubiquitin-like protein Pup from Thermobifida fusca (strain YX).